A 57-amino-acid chain; its full sequence is COP9 signalosome complex subunit 9 (57 aa).

This sequence belongs to the CSN9 family. As to quaternary structure, component of the CSN complex, probably composed of cops1, cops2, cops3, cops4, cops5, cops6, cops7, cops8 and cops9.

Its subcellular location is the nucleus. The protein localises to the cytoplasm. The protein resides in the nucleoplasm. Functionally, component of the COP9 signalosome complex (CSN), a complex involved in various cellular and developmental processes. The CSN complex is an essential regulator of the ubiquitin (Ubl) conjugation pathway by mediating the deneddylation of the cullin subunits of SCF-type E3 ligase complexes, leading to decrease the Ubl ligase activity. May play a role in cell proliferation. This chain is COP9 signalosome complex subunit 9, found in Xenopus laevis (African clawed frog).